The following is a 4034-amino-acid chain: Polyketide synthase-nonribosomal peptide synthetase ACE1 (4034 aa).

Residues 10-448 form the Ketosynthase family 3 (KS3) domain; sequence TEPIAIIGSG…GANAHVILES (439 aa). Catalysis depends on for beta-ketoacyl synthase activity residues C183, H322, and H368. The segment at 560-879 is acyl transferase; that stretch reads VFTGQGAQWA…PYFGCLSRGT (320 aa). The N-terminal hotdog fold stretch occupies residues 951–1082; sequence NELLGTRLPD…GDLVVLLGEP (132 aa). In terms of domain architecture, PKS/mFAS DH spans 951-1257; it reads NELLGTRLPD…TKPLSPPSAA (307 aa). A dehydratase (DH) domain region spans residues 952–1252; sequence ELLGTRLPDD…LQGLHTKPLS (301 aa). H983 acts as the Proton acceptor; for dehydratase activity in catalysis. Residues 1097 to 1257 are C-terminal hotdog fold; the sequence is MKDIDEERFY…TKPLSPPSAA (161 aa). The Proton donor; for dehydratase activity role is filled by D1157. Positions 1396 to 1594 are methyltransferase (MT) domain; the sequence is NMLNRFYSDA…SGADIVTPHH (199 aa). Residues 2144-2317 are ketoreductase (KR)domain; sequence TYWLVGLTGG…AGSSVEIGCI (174 aa). The region spanning 2424-2505 is the Carrier 1 domain; it reads KSSEEVLDIL…LLLEFVQGLI (82 aa). The residue at position 2465 (S2465) is an O-(pantetheine 4'-phosphoryl)serine. The segment at 2512–2598 is disordered; sequence KLDGSDGADA…SPTTSASMAS (87 aa). Positions 2556 to 2577 are enriched in low complexity; the sequence is PSGPASPTSPSSATASPGRSRS. Positions 2586-2598 are enriched in polar residues; sequence TPVSPTTSASMAS. A condensation region spans residues 2608–3037; it reads TVPVSFGQSR…ATSLNRPAIY (430 aa). Positions 3073–3473 are adenylation; sequence KYATKFALRN…GGLIIEGRID (401 aa). A Carrier 2 domain is found at 3598–3678; the sequence is AELGSDQARM…AMTDLVLSDD (81 aa). S3638 is subject to O-(pantetheine 4'-phosphoryl)serine. The reductase-like stretch occupies residues 3719–3944; it reads LTGATGFLGR…DFVSVENVAA (226 aa).

This sequence belongs to the NRP synthetase family.

It localises to the cytoplasm. The protein operates within secondary metabolite biosynthesis. In terms of biological role, hybrid PKS-NRPS synthetase; part of the gene cluster that mediates the biosynthesis of a tyrosine-derived cytochalasan acting as a fungal signal recognized by resistant rice plants and leads to avirulence in Pi33 resistant rice cultivars. The first step in the pathway is catalyzed by the hybrid PKS-NRPS ACE1, assisted by the enoyl reductase RAP1, that are responsible for fusion of the tyrosine precursor and the polyketide backbone. The polyketide synthase module (PKS) of ACE1 is responsible for the synthesis of the polyketide backbone and the downstream nonribosomal peptide synthetase (NRPS) amidates the carboxyl end of the polyketide with the tyrosine precursor. Because ACE1 lacks a designated enoylreductase (ER) domain, the required activity is provided the enoyl reductase RAP1. Reduction by the hydrolyase ORFZ, followed by dehydration and intra-molecular Diels-Alder cyclization by the Diels-Alderase ORF3 then yield the required isoindolone-fused macrocycle. A number of oxidative steps catalyzed by the tailoring enzymes identified within the cluster, including cytochrome P450 monooxygenases CYP1 to CYP4, the FAD-linked oxidoreductase OXR2 and the short-chain dehydrogenase/reductase OXR1, are further required to afford the final cytochalasans that confer avirulence and which have still to be identified. The monooxygenase CYP1 has been shown to be a site-selective C-18 hydroxylase whereas the function of CYP3 is the site-selective epoxidation of the C-6/C-7 olefin that is present in some intermediate compounds. Finally, SYN2 and RAP2 are not required for avirulence in Pi33 resistant rice cultivars. This is Polyketide synthase-nonribosomal peptide synthetase ACE1 from Pyricularia oryzae (strain 70-15 / ATCC MYA-4617 / FGSC 8958) (Rice blast fungus).